A 579-amino-acid chain; its full sequence is MSASSLLEQRPKGQGNKVQNGSVHQKDGLNDDDFEPYLSPQARPNNAYTAMSDSYLPSYYSPSIGFSYSLGEAAWSTGGDTAMPYLTSYGQLSNGEPHFLPDAMFGQPGALGSTPFLGQHGFNFFPSGIDFSAWGNNSSQGQSTQSSGYSSNYAYAPSSLGGAMIDGQSAFANETLNKAPGMNTIDQGMAALKLGSTEVASNVPKVVGSAVGSGSITSNIVASNSLPPATIAPPKPASWADIASKPAKQQPKLKTKNGIAGSSLPPPPIKHNMDIGTWDNKGPVAKAPSQALVQNIGQPTQGSPQPVGQQANNSPPVAQASVGQQTQPLPPPPPQPAQLSVQQQAAQPTRWVAPRNRGSGFGHNGVDGNGVGQSQAGSGSTPSEPHPVLEKLRSINNYNPKDFDWNLKHGRVFIIKSYSEDDIHRSIKYNIWCSTEHGNKRLDAAYRSMNGKGPVYLLFSVNGSGHFCGVAEMKSAVDYNTCAGVWSQDKWKGRFDVRWIFVKDVPNSQLRHIRLENNENKPVTNSRDTQEVPLEKAKQVLKIIASYKHTTSIFDDFSHYEKRQEEEESVKKERQGRGK.

The tract at residues 1 to 45 (MSASSLLEQRPKGQGNKVQNGSVHQKDGLNDDDFEPYLSPQARPN) is disordered. N-acetylserine is present on S2. A phosphoserine mark is found at S2, S4, S5, S22, S39, and S196. Positions 2 to 384 (SASSLLEQRP…QAGSGSTPSE (383 aa)) are localization to mRNA processing bodies (P-bodies). The disordered stretch occupies residues 247–387 (AKQQPKLKTK…SGSTPSEPHP (141 aa)). Polar residues predominate over residues 291–316 (ALVQNIGQPTQGSPQPVGQQANNSPP). Over residues 337 to 349 (AQLSVQQQAAQPT) the composition is skewed to low complexity. S359 bears the Phosphoserine mark. The segment covering 359–371 (SGFGHNGVDGNGV) has biased composition (gly residues). The span at 372-383 (GQSQAGSGSTPS) shows a compositional bias: polar residues. The segment at 385-579 (PHPVLEKLRS…VKKERQGRGK (195 aa)) is interaction with m6A-containing mRNAs. S394 bears the Phosphoserine mark. Residues 410–544 (GRVFIIKSYS…EKAKQVLKII (135 aa)) enclose the YTH domain. Residues 416-418 (KSY), D422, 432-433 (WC), N462, W486, and W491 contribute to the RNA site.

Belongs to the YTHDF family. YTHDF2 subfamily. In terms of assembly, interacts with CNOT1; interaction is direct and promotes recruitment of the CCR4-NOT complex. Interacts with YTHDF3. Interacts with RIDA/HRSP12; interaction leads to recruitment of the ribonuclease P/MRP complex. Post-translationally, ubiquitinated by the SCF(SKP2) complex, leading to its degradation. In terms of tissue distribution, highly expressed in induced pluripotent stem cells (iPSCs) and down-regulated during neural differentiation.

Its subcellular location is the cytoplasm. It is found in the cytosol. It localises to the P-body. The protein localises to the stress granule. The protein resides in the nucleus. Functionally, specifically recognizes and binds N6-methyladenosine (m6A)-containing RNAs, and regulates their stability. M6A is a modification present at internal sites of mRNAs and some non-coding RNAs and plays a role in mRNA stability and processing. Acts as a regulator of mRNA stability by promoting degradation of m6A-containing mRNAs via interaction with the CCR4-NOT and ribonuclease P/MRP complexes, depending on the context. The YTHDF paralogs (YTHDF1, YTHDF2 and YTHDF3) share m6A-containing mRNAs targets and act redundantly to mediate mRNA degradation and cellular differentiation. M6A-containing mRNAs containing a binding site for RIDA/HRSP12 (5'-GGUUC-3') are preferentially degraded by endoribonucleolytic cleavage: cooperative binding of RIDA/HRSP12 and YTHDF2 to transcripts leads to recruitment of the ribonuclease P/MRP complex. Other m6A-containing mRNAs undergo deadenylation via direct interaction between YTHDF2 and CNOT1, leading to recruitment of the CCR4-NOT and subsequent deadenylation of m6A-containing mRNAs. Required maternally to regulate oocyte maturation: probably acts by binding to m6A-containing mRNAs, thereby regulating maternal transcript dosage during oocyte maturation, which is essential for the competence of oocytes to sustain early zygotic development. Also required during spermatogenesis: regulates spermagonial adhesion by promoting degradation of m6A-containing transcripts coding for matrix metallopeptidases. Also involved in hematopoietic stem cells specification by binding to m6A-containing mRNAs, leading to promote their degradation. Also acts as a regulator of neural development by promoting m6A-dependent degradation of neural development-related mRNA targets. Inhibits neural specification of induced pluripotent stem cells by binding to methylated neural-specific mRNAs and promoting their degradation, thereby restraining neural differentiation. Regulates circadian regulation of hepatic lipid metabolism: acts by promoting m6A-dependent degradation of PPARA transcripts. Regulates the innate immune response to infection by inhibiting the type I interferon response: acts by binding to m6A-containing IFNB transcripts and promoting their degradation. May also act as a promoter of cap-independent mRNA translation following heat shock stress: upon stress, relocalizes to the nucleus and specifically binds mRNAs with some m6A methylation mark at their 5'-UTR, protecting demethylation of mRNAs by FTO, thereby promoting cap-independent mRNA translation. Regulates mitotic entry by promoting the phase-specific m6A-dependent degradation of WEE1 transcripts. Promotes formation of phase-separated membraneless compartments, such as P-bodies or stress granules, by undergoing liquid-liquid phase separation upon binding to mRNAs containing multiple m6A-modified residues: polymethylated mRNAs act as a multivalent scaffold for the binding of YTHDF proteins, juxtaposing their disordered regions and thereby leading to phase separation. The resulting mRNA-YTHDF complexes then partition into different endogenous phase-separated membraneless compartments, such as P-bodies, stress granules or neuronal RNA granules. May also recognize and bind RNAs modified by C5-methylcytosine (m5C) and act as a regulator of rRNA processing. In terms of biological role, (Microbial infection) Promotes viral gene expression and replication of polyomavirus SV40: acts by binding to N6-methyladenosine (m6A)-containing viral RNAs. (Microbial infection) Promotes viral gene expression and virion production of kaposis sarcoma-associated herpesvirus (KSHV) at some stage of the KSHV life cycle (in iSLK.219 and iSLK.BAC16 cells). Acts by binding to N6-methyladenosine (m6A)-containing viral RNAs. The polypeptide is YTH domain-containing family protein 2 (Homo sapiens (Human)).